A 184-amino-acid chain; its full sequence is Chromophore lyase CpcS/CpeS 1 (184 aa).

This sequence belongs to the CpcS/CpeS biliprotein lyase family.

Functionally, covalently attaches a chromophore to Cys residue(s) of phycobiliproteins. This Synechococcus sp. (strain JA-3-3Ab) (Cyanobacteria bacterium Yellowstone A-Prime) protein is Chromophore lyase CpcS/CpeS 1.